The chain runs to 439 residues: Putrescine transporter PotE (439 aa).

A run of 12 helical transmembrane segments spans residues 10-30, 40-60, 91-111, 114-134, 152-172, 186-206, 225-245, 276-296, 321-341, 354-374, 387-407, and 410-430; these read GVVQ…IIML, ISII…WAFA, TYGV…VGYG, LLGA…VLWI, ITVW…WFWF, APFF…FLGL, IAVL…TNVI, VIMA…QFTI, APVQ…LMTI, NLAV…LVII, VANF…YSSG, and AMLY…LVSP.

The protein belongs to the amino acid-polyamine-organocation (APC) superfamily. Basic amino acid/polyamine antiporter (APA) (TC 2.A.3.2) family.

Its subcellular location is the cell inner membrane. It carries out the reaction putrescine(in) + H(+)(in) = putrescine(out) + H(+)(out). It catalyses the reaction putrescine(in) + L-ornithine(out) = putrescine(out) + L-ornithine(in). In terms of biological role, catalyzes both the uptake and excretion of putrescine. The uptake of putrescine is dependent on the membrane potential and the excretion involves putrescine-ornithine antiporter activity. The chain is Putrescine transporter PotE from Escherichia coli O6:H1 (strain CFT073 / ATCC 700928 / UPEC).